We begin with the raw amino-acid sequence, 101 residues long: Large ribosomal subunit protein uL24 (101 aa).

This sequence belongs to the universal ribosomal protein uL24 family. In terms of assembly, part of the 50S ribosomal subunit.

Its function is as follows. One of two assembly initiator proteins, it binds directly to the 5'-end of the 23S rRNA, where it nucleates assembly of the 50S subunit. One of the proteins that surrounds the polypeptide exit tunnel on the outside of the subunit. This is Large ribosomal subunit protein uL24 from Streptococcus thermophilus (strain CNRZ 1066).